A 338-amino-acid polypeptide reads, in one-letter code: 4-hydroxythreonine-4-phosphate dehydrogenase (338 aa).

Positions 136 and 137 each coordinate substrate. Residues histidine 173, histidine 218, and histidine 273 each coordinate a divalent metal cation. Residues lysine 281, asparagine 290, and arginine 299 each coordinate substrate.

This sequence belongs to the PdxA family. As to quaternary structure, homodimer. Zn(2+) is required as a cofactor. Requires Mg(2+) as cofactor. It depends on Co(2+) as a cofactor.

It is found in the cytoplasm. The enzyme catalyses 4-(phosphooxy)-L-threonine + NAD(+) = 3-amino-2-oxopropyl phosphate + CO2 + NADH. It participates in cofactor biosynthesis; pyridoxine 5'-phosphate biosynthesis; pyridoxine 5'-phosphate from D-erythrose 4-phosphate: step 4/5. Functionally, catalyzes the NAD(P)-dependent oxidation of 4-(phosphooxy)-L-threonine (HTP) into 2-amino-3-oxo-4-(phosphooxy)butyric acid which spontaneously decarboxylates to form 3-amino-2-oxopropyl phosphate (AHAP). This Ralstonia nicotianae (strain ATCC BAA-1114 / GMI1000) (Ralstonia solanacearum) protein is 4-hydroxythreonine-4-phosphate dehydrogenase.